A 189-amino-acid chain; its full sequence is MSIKSDRWIKRMAEQHAMIAPFEPGQIKHDAAGQRIVSFGTSSYGYDVRCSREFKIFTNINSTIVDPKRFDPGSFVDVESDVCIIPPNSFALARTVEYFRIPRDTLVVCLGKSTYARCGIIVNVTPLEPEWEGHVTLEFSNTTPLPARIYANEGVAQMLFFQSDEVCETSYKDRGGKYQGQTGVTLPRT.

DCTP-binding positions include 112-117 (KSTYAR), 136-138 (TLE), Q157, Y171, and Q181. The Proton donor/acceptor role is filled by E138.

It belongs to the dCTP deaminase family. As to quaternary structure, homotrimer.

It catalyses the reaction dCTP + H2O + H(+) = dUTP + NH4(+). The protein operates within pyrimidine metabolism; dUMP biosynthesis; dUMP from dCTP (dUTP route): step 1/2. Catalyzes the deamination of dCTP to dUTP. The polypeptide is dCTP deaminase (Xanthomonas oryzae pv. oryzae (strain MAFF 311018)).